We begin with the raw amino-acid sequence, 299 residues long: Ophiobolin family sesterterpenoid biosynthesis cluster acetyltransferase (299 aa).

The first 20 residues, 1–20 (MYFFRALLSPVVLWPALVSG), serve as a signal peptide directing secretion. N-linked (GlcNAc...) asparagine glycans are attached at residues Asn-28, Asn-58, Asn-77, Asn-126, Asn-177, Asn-212, and Asn-282.

It belongs to the bfoA family.

It participates in secondary metabolite biosynthesis; terpenoid biosynthesis. Functionally, acetyltransferase; part of the gene cluster that mediates the biosynthesis of an ophiobolin family sesterterpenoid. In terms of biological role, sesterterpenoid synthase; part of the gene cluster that mediates the biosynthesis of an ophiobolin family sesterterpenoid. The chain is Ophiobolin family sesterterpenoid biosynthesis cluster acetyltransferase from Aspergillus terreus.